The primary structure comprises 101 residues: Small ribosomal subunit protein bS6 (101 aa).

Belongs to the bacterial ribosomal protein bS6 family.

Functionally, binds together with bS18 to 16S ribosomal RNA. The polypeptide is Small ribosomal subunit protein bS6 (Staphylococcus saprophyticus subsp. saprophyticus (strain ATCC 15305 / DSM 20229 / NCIMB 8711 / NCTC 7292 / S-41)).